A 342-amino-acid chain; its full sequence is Glucokinase (342 aa).

7–12 (GDIGGT) lines the ATP pocket.

Belongs to the bacterial glucokinase family.

The protein resides in the cytoplasm. The enzyme catalyses D-glucose + ATP = D-glucose 6-phosphate + ADP + H(+). This chain is Glucokinase, found in Trichormus variabilis (strain ATCC 29413 / PCC 7937) (Anabaena variabilis).